A 127-amino-acid polypeptide reads, in one-letter code: MPPKGKGGKGAKGGAASGEAADKKAQTPKGGNAVKVRHILCEKHGKVMEAMEKLKSGVRFSEVATQYSEDKARQGGDLGWMTRGSMVGPFQDAAFALPVSTMDKPVYTDPPVKTKFGYHIIMVEGRK.

The segment at 1-33 (MPPKGKGGKGAKGGAASGEAADKKAQTPKGGNA) is disordered. The 95-residue stretch at 31–125 (GNAVKVRHIL…FGYHIIMVEG (95 aa)) folds into the PpiC domain.

Belongs to the PpiC/parvulin rotamase family. PIN4 subfamily.

The protein localises to the nucleus. It is found in the nucleolus. Its subcellular location is the cytoplasm. It localises to the cytoskeleton. The protein resides in the spindle. It carries out the reaction [protein]-peptidylproline (omega=180) = [protein]-peptidylproline (omega=0). In terms of biological role, may be involved as a ribosomal RNA processing factor in ribosome biogenesis. Binds to DNA. The polypeptide is Peptidyl-prolyl cis-trans isomerase NIMA-interacting 4 (pin4) (Xenopus tropicalis (Western clawed frog)).